Consider the following 283-residue polypeptide: 4-hydroxy-3-methylbut-2-enyl diphosphate reductase (283 aa).

Residue Cys12 participates in [4Fe-4S] cluster binding. Residues His41 and His74 each contribute to the (2E)-4-hydroxy-3-methylbut-2-enyl diphosphate site. Residues His41 and His74 each coordinate dimethylallyl diphosphate. 2 residues coordinate isopentenyl diphosphate: His41 and His74. Cys96 contacts [4Fe-4S] cluster. His124 is a (2E)-4-hydroxy-3-methylbut-2-enyl diphosphate binding site. His124 serves as a coordination point for dimethylallyl diphosphate. His124 serves as a coordination point for isopentenyl diphosphate. The active-site Proton donor is Glu126. A (2E)-4-hydroxy-3-methylbut-2-enyl diphosphate-binding site is contributed by Thr161. [4Fe-4S] cluster is bound at residue Cys189. The (2E)-4-hydroxy-3-methylbut-2-enyl diphosphate site is built by Ser217, Asn219, and Ser261. Dimethylallyl diphosphate contacts are provided by Ser217, Asn219, and Ser261. Isopentenyl diphosphate contacts are provided by Ser217, Asn219, and Ser261.

Belongs to the IspH family. [4Fe-4S] cluster serves as cofactor.

It catalyses the reaction isopentenyl diphosphate + 2 oxidized [2Fe-2S]-[ferredoxin] + H2O = (2E)-4-hydroxy-3-methylbut-2-enyl diphosphate + 2 reduced [2Fe-2S]-[ferredoxin] + 2 H(+). The enzyme catalyses dimethylallyl diphosphate + 2 oxidized [2Fe-2S]-[ferredoxin] + H2O = (2E)-4-hydroxy-3-methylbut-2-enyl diphosphate + 2 reduced [2Fe-2S]-[ferredoxin] + 2 H(+). The protein operates within isoprenoid biosynthesis; dimethylallyl diphosphate biosynthesis; dimethylallyl diphosphate from (2E)-4-hydroxy-3-methylbutenyl diphosphate: step 1/1. Its pathway is isoprenoid biosynthesis; isopentenyl diphosphate biosynthesis via DXP pathway; isopentenyl diphosphate from 1-deoxy-D-xylulose 5-phosphate: step 6/6. Its function is as follows. Catalyzes the conversion of 1-hydroxy-2-methyl-2-(E)-butenyl 4-diphosphate (HMBPP) into a mixture of isopentenyl diphosphate (IPP) and dimethylallyl diphosphate (DMAPP). Acts in the terminal step of the DOXP/MEP pathway for isoprenoid precursor biosynthesis. The chain is 4-hydroxy-3-methylbut-2-enyl diphosphate reductase from Anaeromyxobacter sp. (strain Fw109-5).